A 1047-amino-acid chain; its full sequence is Exportin-6 (1047 aa).

The Importin N-terminal domain maps to 32 to 98 (IDTILNNYKA…KGLLLDIYLN (67 aa)).

It belongs to the exportin family.

It localises to the nucleus. Its subcellular location is the cytoplasm. Its function is as follows. Probably mediates the nuclear export of actin and profilin-actin complexes. This is Exportin-6 (xpo6) from Dictyostelium discoideum (Social amoeba).